The chain runs to 395 residues: Envelope glycoprotein D (395 aa).

An N-terminal signal peptide occupies residues 1-17 (MGSGIAAVLLSLAVALA). Residues 18–342 (RVPAGEGEYV…PAPAPSGHTG (325 aa)) are Virion surface-facing. H63 lines the Zn(2+) pocket. Cystine bridges form between C90/C214, C131/C227, and C143/C152. N-linked (GlcNAc...) asparagine; by host glycosylation occurs at N119. D240 lines the Zn(2+) pocket. The profusion stretch occupies residues 261-306 (LQAAGWHGPKAPFTSTLLPPEVVETANVTRPELAPEERGTSRTPGD). N-linked (GlcNAc...) asparagine; by host glycosylation occurs at N287. A disordered region spans residues 289 to 314 (TRPELAPEERGTSRTPGDEPAPAVAA). Residues 343 to 362 (AVVGALAGAGLAAGVVVLAV) form a helical membrane-spanning segment. Topologically, residues 363–395 (YLVRRRGRAAGKHVRLPELLEEAHGPARRGAPY) are intravirion.

It belongs to the herpesviridae glycoprotein D family.

It is found in the virion membrane. Envelope glycoprotein that binds to host cell entry receptors, promoting the virus entry into host cells. May trigger fusion with host membrane, by recruiting the fusion machinery composed of gB and gH/gL. This is Envelope glycoprotein D (gD) from Cercopithecine herpesvirus 1 (CeHV-1).